Consider the following 431-residue polypeptide: 3-phosphoshikimate 1-carboxyvinyltransferase (431 aa).

The 3-phosphoshikimate site is built by lysine 26, serine 27, and arginine 31. Lysine 26 contacts phosphoenolpyruvate. Glycine 99 and arginine 127 together coordinate phosphoenolpyruvate. Residues serine 170, serine 171, glutamine 172, serine 199, glutamate 314, and histidine 343 each contribute to the 3-phosphoshikimate site. Glutamine 172 serves as a coordination point for phosphoenolpyruvate. Glutamate 314 serves as the catalytic Proton acceptor. Phosphoenolpyruvate is bound by residues arginine 347, arginine 388, and lysine 413.

Belongs to the EPSP synthase family. As to quaternary structure, monomer.

The protein localises to the cytoplasm. The catalysed reaction is 3-phosphoshikimate + phosphoenolpyruvate = 5-O-(1-carboxyvinyl)-3-phosphoshikimate + phosphate. The protein operates within metabolic intermediate biosynthesis; chorismate biosynthesis; chorismate from D-erythrose 4-phosphate and phosphoenolpyruvate: step 6/7. Functionally, catalyzes the transfer of the enolpyruvyl moiety of phosphoenolpyruvate (PEP) to the 5-hydroxyl of shikimate-3-phosphate (S3P) to produce enolpyruvyl shikimate-3-phosphate and inorganic phosphate. The protein is 3-phosphoshikimate 1-carboxyvinyltransferase of Mycobacterium ulcerans (strain Agy99).